The chain runs to 2273 residues: Acetyl-CoA carboxylase, mitochondrial (2273 aa).

The transit peptide at 1 to 104 (KGKTITHGQS…RGNIHKHTRL (104 aa)) directs the protein to the mitochondrion. A Biotin carboxylation domain is found at 134-635 (VISKILIANN…STGWLDDLIL (502 aa)). An ATP-grasp domain is found at 292–484 (KTNFVSVPDD…LPATQLQIAM (193 aa)). An ATP-binding site is contributed by 332 to 337 (GGGGKG). Arginine 459 is a catalytic residue. Positions 763–837 (LEAELNPTQV…EAGDVIAKLT (75 aa)) constitute a Biotinyl-binding domain. Residue lysine 804 is modified to N6-biotinyllysine. Positions 1532–1867 (PYSVKDWLQP…KRDMSPPLLE (336 aa)) constitute a CoA carboxyltransferase N-terminal domain. The segment at 1532 to 2187 (PYSVKDWLQP…EGQVIKRLQK (656 aa)) is carboxyltransferase. CoA-binding residues include arginine 1776, lysine 2080, and arginine 2082. The region spanning 1871–2187 (RWDRDVDFKP…EGQVIKRLQK (317 aa)) is the CoA carboxyltransferase C-terminal domain.

Biotin is required as a cofactor.

The protein resides in the mitochondrion. The catalysed reaction is hydrogencarbonate + acetyl-CoA + ATP = malonyl-CoA + ADP + phosphate + H(+). It catalyses the reaction N(6)-biotinyl-L-lysyl-[protein] + hydrogencarbonate + ATP = N(6)-carboxybiotinyl-L-lysyl-[protein] + ADP + phosphate + H(+). It functions in the pathway lipid metabolism; malonyl-CoA biosynthesis; malonyl-CoA from acetyl-CoA: step 1/1. Functionally, catalyzes the rate-limiting reaction in the mitochondrial fatty acid synthesis (FAS) type II pathway. Responsible for the production of the mitochondrial malonyl-CoA, used for the biosynthesis of the cofactor lipoic acid. This protein carries three functions: biotin carboxyl carrier protein, biotin carboxylase, and carboxyltransferase. The protein is Acetyl-CoA carboxylase, mitochondrial (HFA1) of Saccharomyces cerevisiae (strain RM11-1a) (Baker's yeast).